A 438-amino-acid polypeptide reads, in one-letter code: Neutral metalloprotease ShpI (438 aa).

A signal peptide spans 1 to 26 (MINKKKLVTSLVTSSLLATFTLGSFA). The propeptide occupies 27–101 (DAHTYIINNE…KSENALSNSK (75 aa)). Zn(2+) is bound at residue histidine 242. Glutamate 243 is an active-site residue. Zn(2+)-binding residues include histidine 246 and glutamate 269.

This sequence belongs to the peptidase M30 family. Zn(2+) is required as a cofactor. Post-translationally, several different N-terminal ends may be produced, the favored N-terminus is position 102.

The protein localises to the secreted. Inhibited by metal- and zinc-specific inhibitors, such as EDTA and 1,10-phenanthroline in vitro. Is resistant to all inhibitors of serine, cysteine and aspartic proteases. Its function is as follows. Protease that has a low substrate specificity. Catalyzes the hydrolysis of glucagon, melittin and oxidized beta-insulin at various positions in vitro. Is not able to cleave elastin or the synthetic substrates FAGLA (a substrate for neutral proteinases) and FALGPA (a substrate for collagenase). The polypeptide is Neutral metalloprotease ShpI (Staphylococcus hyicus).